The following is a 168-amino-acid chain: Protein GRIM REAPER (168 aa).

The signal sequence occupies residues 1–30; it reads MVIKIPNTFIKATSLLSLILYFLIIATSKS. The N-linked (GlcNAc...) asparagine glycan is linked to asparagine 59.

It belongs to the STIG1 family. Interacts with PRK5 and to a lower extent with PRK4. As to expression, highly expressed in flowers, and at very low levels in leaves.

The protein localises to the secreted. Its subcellular location is the extracellular space. It localises to the apoplast. In terms of biological role, involved in the regulation of cell death induced by extracellular reactive oxygen species. Only the processed peptide, and not the full length GRI can bind in vivo to the extracellular domain of the receptor PRK5. The GRIp-induced cell death is superoxide and salicylic acid dependent. This Arabidopsis thaliana (Mouse-ear cress) protein is Protein GRIM REAPER.